Consider the following 605-residue polypeptide: uncharacterized protein (605 aa).

Residues 22 to 93 (FTEPARFYPS…KQGTAVHGAE (72 aa)) form a disordered region. Low complexity predominate over residues 46 to 57 (SENASSSVPSHS).

This is an uncharacterized protein from Treponema pallidum (strain Nichols).